Consider the following 100-residue polypeptide: C-X-C motif chemokine 11 (100 aa).

Residues 1 to 21 (MNRKVTAIALAAIIWATAAQG) form the signal peptide. Cystine bridges form between Cys-30–Cys-57 and Cys-32–Cys-74.

The protein belongs to the intercrine alpha (chemokine CxC) family. As to quaternary structure, interacts with TNFAIP6 (via Link domain).

It is found in the secreted. Chemotactic for interleukin-activated T-cells but not unstimulated T-cells, neutrophils or monocytes. Induces calcium release in activated T-cells. Binds to CXCR3. May play an important role in CNS diseases which involve T-cell recruitment. May play a role in skin immune responses. The sequence is that of C-X-C motif chemokine 11 (Cxcl11) from Mus musculus (Mouse).